Consider the following 434-residue polypeptide: Putative DD-carboxypeptidase TP_0574 (434 aa).

The first 19 residues, 1–19 (MKVKYALLSAGALQLLVVG), serve as a signal peptide directing secretion. Cys-20 carries N-palmitoyl cysteine lipidation. A lipid anchor (S-diacylglycerol cysteine) is attached at Cys-20.

Probably a monomer; a non-lipidated construct (residues 22-434) is monomeric in solution but crystallizes as a homodimer. It depends on Zn(2+) as a cofactor. The N-terminus is blocked. Present as a doublet of low abundance 48 kDa and high abundance 47 kDa proteins. The longer form is probably due to readthrough of the stop codon; the extra amino acids at the C-terminus would be X-Lys-Arg-Gly-Val-Leu-Ser-Arg-Val-Ser, a peptide antibody against this sequence detects only the 48 kDa form.

The protein resides in the cell inner membrane. Its function is as follows. A possible D,D-carboxypeptidase, that releases amino acids sequentially from a proteins C-terminus. Has zinc-dependent carboxypeptidase activity on synthetic depsipeptide substrates. May serve to decrease cross-linking of peptidoglycan, promoting the highly sinusous motility of this spirochaete. Overexpression of the whole protein in E.coli leads to aberrant cell morphology and extrusion of the cytoplasm, while overexpression of a construct with the first 62 resides of the protein fused to PhoA does have this effect, suggesting the whole protein, not the lipoprotein moiety, is toxic. Binds penicillin. Penicillin binding is covalent, does not require lipidation, and is zinc-dependent. While this protein has beta-lactamase activity in vitro, that is probably not its role in vivo, as T.pallidum is very sensitive to penicillin antibiotics. In terms of biological role, a pathogen-specific membrane antigen. Most abundant of the membrane lipoproteins, only found in pathogenic treponemes, suggesting that it is an important structural moiety in the cell envelope of virulent treponemal subspecies. A lipopeptide corresponding to the first 6 mature residues induces host (human and mouse) cytokine release by monocyte cell lines via TLR2 and CD14; nonlipidated protein does not stimulate host cells. Stimulates host (human) dendritic cell maturation to become MHC class II-positive antigen presenting cells via TLR2, which depends on lipidation; nonlipidated protein does not stimulate maturation. This is Putative DD-carboxypeptidase TP_0574 from Treponema pallidum (strain Nichols).